A 288-amino-acid polypeptide reads, in one-letter code: Mortality factor 4-like protein 2 (288 aa).

The span at M1–S15 shows a compositional bias: polar residues. The segment at M1 to F115 is disordered. S71 is modified (phosphoserine). The region spanning S117–L288 is the MRG domain.

As to quaternary structure, component of the NuA4 histone acetyltransferase complex which contains the catalytic subunit KAT5/TIP60 and the subunits EP400, TRRAP/PAF400, BRD8/SMAP, EPC1, DMAP1/DNMAP1, RUVBL1/TIP49, RUVBL2, ING3, actin, ACTL6A/BAF53A, MORF4L1/MRG15, MORF4L2/MRGX, MRGBP, YEATS4/GAS41 and VPS72/YL1. The NuA4 complex interacts with MYC and the adenovirus E1A protein. MORF4L1 may also participate in the formation of NuA4 related complexes which lack the KAT5/TIP60 catalytic subunit, but which include the SWI/SNF related protein SRCAP. Component of the MSIN3A histone deacetylase complex, which includes SIN3A, HDAC2, ARID4B, MORF4L1, RBBP4/RbAp48, and RBBP7/RbAp46. Interacts with MRFAP1 and RB1. May also interact with one or more as yet undefined members of the TLE (transducin-like enhancer of split) family of transcriptional repressors.

The protein localises to the nucleus. Its function is as follows. Component of the NuA4 histone acetyltransferase complex which is involved in transcriptional activation of select genes principally by acetylation of nucleosomal histone H4 and H2A. This modification may both alter nucleosome - DNA interactions and promote interaction of the modified histones with other proteins which positively regulate transcription. This complex may be required for the activation of transcriptional programs associated with oncogene and proto-oncogene mediated growth induction, tumor suppressor mediated growth arrest and replicative senescence, apoptosis, and DNA repair. The NuA4 complex ATPase and helicase activities seem to be, at least in part, contributed by the association of RUVBL1 and RUVBL2 with EP400. NuA4 may also play a direct role in DNA repair when directly recruited to sites of DNA damage. Also a component of the MSIN3A complex which acts to repress transcription by deacetylation of nucleosomal histones. This is Mortality factor 4-like protein 2 (Morf4l2) from Mus musculus (Mouse).